We begin with the raw amino-acid sequence, 176 residues long: Ribosome rescue factor SmrB (176 aa).

The tract at residues 29–51 (TIIQQPKKNTKQKEIKRSNREAS) is disordered. A compositionally biased stretch (basic and acidic residues) spans 39–51 (KQKEIKRSNREAS). In terms of domain architecture, Smr spans 97 to 172 (LDMHGMTQQE…GDGALLVLLS (76 aa)).

It belongs to the SmrB family. Associates with collided ribosomes, but not with correctly translating polysomes.

Its function is as follows. Acts as a ribosome collision sensor. Detects stalled/collided disomes (pairs of ribosomes where the leading ribosome is stalled and a second ribosome has collided with it) and endonucleolytically cleaves mRNA at the 5' boundary of the stalled ribosome. Stalled/collided disomes form a new interface (primarily via the 30S subunits) that binds SmrB. Cleaved mRNA becomes available for tmRNA ligation, leading to ribosomal subunit dissociation and rescue of stalled ribosomes. This is Ribosome rescue factor SmrB from Vibrio parahaemolyticus serotype O3:K6 (strain RIMD 2210633).